The chain runs to 348 residues: Lysophosphatidic acid receptor 2 (348 aa).

Over 1 to 30 (MGQCYYNETIGFFYNNSGKELSSHWRPKDV) the chain is Extracellular. Residues asparagine 7 and asparagine 15 are each glycosylated (N-linked (GlcNAc...) asparagine). A helical membrane pass occupies residues 31-51 (VVVALGLTVSVLVLLTNLLVI). Topologically, residues 52–66 (AAIASNRRFHQPIYY) are cytoplasmic. Residues 67 to 87 (LLGNLAAADLFAGVAYLFLMF) form a helical membrane-spanning segment. Residues 88 to 100 (HTGPRTARLSLEG) lie on the Extracellular side of the membrane. The chain crosses the membrane as a helical span at residues 101–123 (WFLRQGLLDTSLTASVATLLAIA). Topologically, residues 124–143 (VERHRSVMAVQLHSRLPRGR) are cytoplasmic. The chain crosses the membrane as a helical span at residues 144–164 (VVMLIVGVWVAALGLGLLPAH). At 165 to 185 (SWHCLCALDRCSRMAPLLSRS) the chain is on the extracellular side. A helical transmembrane segment spans residues 186-206 (YLAVWALSSLLVFLLMVAVYT). The Cytoplasmic portion of the chain corresponds to 207–239 (RIFFYVRRRVQRMAEHVSCHPRYRETTLSLVKT). Residues 240–260 (VVIILGAFVVCWTPGQVVLLL) traverse the membrane as a helical segment. Residues 261–276 (DGLGCESCNVLAVEKY) are Extracellular-facing. Residues 277–294 (FLLLAEANSLVNAAVYSC) form a helical membrane-spanning segment. Over 295–348 (RDAEMRRTFRRLLCCACLRQSTRESVHYTSSAQGGASTRIMLPENGHPLMDSTL) the chain is Cytoplasmic. Cysteine 308 carries the S-palmitoyl cysteine lipid modification. The PDZ-binding motif lies at 345 to 348 (DSTL).

It belongs to the G-protein coupled receptor 1 family. In terms of assembly, interacts with SLC9A3R2/NHERF2, MAGI3 and PLCB3. Interacts with RALA and GRK2. In terms of tissue distribution, expressed most abundantly in testes and peripheral blood leukocytes with less expression in pancreas, spleen, thymus and prostate. Little or no expression in heart, brain, placenta, lung, liver, skeletal muscle, kidney, ovary, small intestine, or colon.

It localises to the cell surface. The protein localises to the cell membrane. In terms of biological role, receptor for lysophosphatidic acid (LPA), a mediator of diverse cellular activities. Seems to be coupled to the G(i)/G(o), G(12)/G(13), and G(q) families of heteromeric G proteins. Plays a key role in phospholipase C-beta (PLC-beta) signaling pathway. Stimulates phospholipase C (PLC) activity in a manner that is independent of RALA activation. This Homo sapiens (Human) protein is Lysophosphatidic acid receptor 2.